Here is a 414-residue protein sequence, read N- to C-terminus: Serine hydroxymethyltransferase (414 aa).

Residues Leu121 and 125–127 each bind (6S)-5,6,7,8-tetrahydrofolate; that span reads GHL. At Lys229 the chain carries N6-(pyridoxal phosphate)lysine.

This sequence belongs to the SHMT family. As to quaternary structure, homodimer. It depends on pyridoxal 5'-phosphate as a cofactor.

It is found in the cytoplasm. The catalysed reaction is (6R)-5,10-methylene-5,6,7,8-tetrahydrofolate + glycine + H2O = (6S)-5,6,7,8-tetrahydrofolate + L-serine. It participates in one-carbon metabolism; tetrahydrofolate interconversion. It functions in the pathway amino-acid biosynthesis; glycine biosynthesis; glycine from L-serine: step 1/1. Catalyzes the reversible interconversion of serine and glycine with tetrahydrofolate (THF) serving as the one-carbon carrier. This reaction serves as the major source of one-carbon groups required for the biosynthesis of purines, thymidylate, methionine, and other important biomolecules. Also exhibits THF-independent aldolase activity toward beta-hydroxyamino acids, producing glycine and aldehydes, via a retro-aldol mechanism. This chain is Serine hydroxymethyltransferase, found in Polynucleobacter necessarius subsp. necessarius (strain STIR1).